The following is a 110-amino-acid chain: uncharacterized protein (110 aa).

It belongs to the HesB/IscA family.

This is an uncharacterized protein from Rickettsia prowazekii (strain Madrid E).